The chain runs to 171 residues: CDP-archaeol synthase (171 aa).

A run of 4 helical transmembrane segments spans residues 11–31, 65–85, 129–149, and 151–171; these read VLYV…GLVF, VGLV…IGVI, LILV…IMLI, and LVLH…DVWY.

It belongs to the CDP-archaeol synthase family. It depends on Mg(2+) as a cofactor.

It localises to the cell membrane. The catalysed reaction is 2,3-bis-O-(geranylgeranyl)-sn-glycerol 1-phosphate + CTP + H(+) = CDP-2,3-bis-O-(geranylgeranyl)-sn-glycerol + diphosphate. Its pathway is membrane lipid metabolism; glycerophospholipid metabolism. Functionally, catalyzes the formation of CDP-2,3-bis-(O-geranylgeranyl)-sn-glycerol (CDP-archaeol) from 2,3-bis-(O-geranylgeranyl)-sn-glycerol 1-phosphate (DGGGP) and CTP. This reaction is the third ether-bond-formation step in the biosynthesis of archaeal membrane lipids. This is CDP-archaeol synthase from Methanothermobacter thermautotrophicus (strain ATCC 29096 / DSM 1053 / JCM 10044 / NBRC 100330 / Delta H) (Methanobacterium thermoautotrophicum).